A 233-amino-acid polypeptide reads, in one-letter code: MANDGIQRNDNRKGFKTVQFSAYSKEIDVIMKKISFLERNITQQLDTLPHFPKTLPPNHKDCVSRKHRARRGWSSQLKNLLGIYSKEEIFTLDNLAATLHDQVLKLQATLFPNAILKQVHLDNANIENKRILKEITYKYLSNENCKEENKFGTFIVKRIFFGDLSLGVSVLINRIAFESATSSIMVVRSSFIESDFFYEDYLIFDCRAKRRKKLKRKILFISTTMNFNYQTKV.

The segment at 196 to 212 (FFYEDYLIFDCRAKRRK) is the nascent chain stimulates ribosomal stalling during translation by interfering with the conformation of the peptidyl transferase center (PTC), and the translating mRNA by adopting a difficult-to-decode structure at the ribosome decoding center.

Acts as an endogenous target of the ribosome quality control (RQC) pathway. During translation, the nascent chain has a propensity to stall ribosomes, thereby stimulating activation of the RQC pathway. This is an uncharacterized protein from Saccharomyces cerevisiae (strain ATCC 204508 / S288c) (Baker's yeast).